The following is a 477-amino-acid chain: MSSGRIVQIIGAVLDVEFNRNEVPRIYDALQVDGTETTLEVQQQLGDGIVRTIAMGSTEGLKRNLSVTNTGGPISVPVGVGTLGRIMDVLGRPIDEEGPVEADERWSIHREAPSYAEQSNSTELLETGIKVIDLLCPFAKGGKVGLFGGAGVGKTVNMMELINNIALKHEGLSVFAGVGERTREGNDFYHEMQEAGVVNTEDFSKSKVAMVYGQMNEPPGNRLRVALSGLTMAEYFRDTKDPATGKGRDVLLFVDNIYRYTLAGTEVSALLGRMPSAVGYQPTLAEEMGMLQERITSTQSGSITSVQAVYVPADDLTDPSPATTFAHLDATVVLSRDIASQGIYPAVDPLDSTSRQLDPLVIGEEHYNVARGVQEVLQRYKELKDIIAILGMDELSEEDKLVVYRARKIQRFLSQPFHVAEVFTGAPGKYVPLRDTIASFKAIIAGEYDSLPEQAFYMAGGIDEVVAKAEKMKSSAA.

Residue 148-155 (GGAGVGKT) participates in ATP binding.

It belongs to the ATPase alpha/beta chains family. As to quaternary structure, F-type ATPases have 2 components, CF(1) - the catalytic core - and CF(0) - the membrane proton channel. CF(1) has five subunits: alpha(3), beta(3), gamma(1), delta(1), epsilon(1). CF(0) has three main subunits: a(1), b(2) and c(9-12). The alpha and beta chains form an alternating ring which encloses part of the gamma chain. CF(1) is attached to CF(0) by a central stalk formed by the gamma and epsilon chains, while a peripheral stalk is formed by the delta and b chains.

The protein localises to the cell inner membrane. The enzyme catalyses ATP + H2O + 4 H(+)(in) = ADP + phosphate + 5 H(+)(out). In terms of biological role, produces ATP from ADP in the presence of a proton gradient across the membrane. The catalytic sites are hosted primarily by the beta subunits. In Psychrobacter arcticus (strain DSM 17307 / VKM B-2377 / 273-4), this protein is ATP synthase subunit beta.